We begin with the raw amino-acid sequence, 440 residues long: Xylose isomerase (440 aa).

Active-site residues include H101 and D104. Residues E232, E268, H271, D296, D307, D309, and D339 each coordinate Mg(2+).

It belongs to the xylose isomerase family. Homotetramer. Mg(2+) is required as a cofactor.

The protein localises to the cytoplasm. The enzyme catalyses alpha-D-xylose = alpha-D-xylulofuranose. The protein is Xylose isomerase of Salmonella agona (strain SL483).